Here is a 560-residue protein sequence, read N- to C-terminus: General negative regulator of transcription subunit 5 (560 aa).

3 coiled-coil regions span residues 3–26 (QRKL…DFDD), 37–71 (SNSS…SKED), and 124–177 (KRDQ…NEMD). The disordered stretch occupies residues 212–330 (CEIQPSSSNN…DSEQQLNFPP (119 aa)). Positions 215 to 237 (QPSSSNNEAPKEGNNQTSLSSIR) are enriched in polar residues. The segment covering 273–288 (SQSISSTPTPVSTDTP) has biased composition (low complexity). The segment covering 299–311 (FDNSTLGTPTTHV) has biased composition (polar residues). Thr306 bears the Phosphothreonine mark. Lys338 participates in a covalent cross-link: Glycyl lysine isopeptide (Lys-Gly) (interchain with G-Cter in ubiquitin). Ser377 is subject to Phosphoserine.

Belongs to the CNOT2/3/5 family. As to quaternary structure, forms a NOT protein complex that comprises NOT1, NOT2, NOT3, NOT4 and NOT5. Subunit of the 1.0 MDa CCR4-NOT core complex that contains CCR4, CAF1, NOT1, NOT2, NOT3, NOT4, NOT5, CAF40 and CAF130. In the complex interacts with NOT1 and NOT2. The core complex probably is part of a less characterized 1.9 MDa CCR4-NOT complex.

It is found in the cytoplasm. The protein resides in the nucleus. Functionally, acts as a component of the CCR4-NOT core complex, which in the nucleus seems to be a general transcription factor, and in the cytoplasm the major mRNA deadenylase involved in mRNA turnover. The NOT protein subcomplex negatively regulates the basal and activated transcription of many genes. Preferentially affects TC-type TATA element-dependent transcription. Could directly or indirectly inhibit component(s) of the general transcription machinery. The chain is General negative regulator of transcription subunit 5 (NOT5) from Saccharomyces cerevisiae (strain ATCC 204508 / S288c) (Baker's yeast).